The chain runs to 312 residues: uncharacterized protein (312 aa).

This is an uncharacterized protein from Mycoplasma (Bacteriophage L2).